An 89-amino-acid chain; its full sequence is Small ribosomal subunit protein bS16 (89 aa).

The protein belongs to the bacterial ribosomal protein bS16 family.

The protein is Small ribosomal subunit protein bS16 of Geobacillus stearothermophilus (Bacillus stearothermophilus).